The sequence spans 1525 residues: Receptor-type guanylate cyclase Gyc76C (1525 aa).

Positions 1-19 are cleaved as a signal peptide; the sequence is MTRWPFNLLLLLSVAVRDC. Residues 20-493 lie on the Extracellular side of the membrane; sequence SNHRTVLTVG…KKDDTHYTST (474 aa). 9 N-linked (GlcNAc...) asparagine glycosylation sites follow: Asn74, Asn184, Asn222, Asn338, Asn383, Asn394, Asn416, Asn428, and Asn458. The helical transmembrane segment at 494 to 514 threads the bilayer; sequence VAAVVLGVLLFCSGVITMSIY. The Cytoplasmic segment spans residues 515–1525; that stretch reads RKWKIELEIE…AAARDRESIV (1011 aa). In terms of domain architecture, Protein kinase spans 547–824; that stretch reads PSKVSLMSAQ…SVIRNRLKKM (278 aa). Residues 553 to 561 and Lys581 each bind ATP; that span reads MSAQSYGSR. The Guanylate cyclase domain occupies 896–1026; the sequence is TIYFSDIVGF…DTVNTASRME (131 aa). Mg(2+) is bound by residues Asp901, Ile902, and Asp945. 3 disordered regions span residues 1122–1168, 1192–1217, and 1256–1308; these read GSRR…NGLG, ETNETNCDMDGGSGGVSGSGSGLVRQ, and ESRS…VHSS. Residues 1147–1162 show a composition bias toward basic and acidic residues; it reads ESPRMVSKRDRDRERP. Gly residues predominate over residues 1202 to 1212; the sequence is GGSGGVSGSGS. The segment covering 1282–1308 has biased composition (polar residues); it reads LSKNNSRSLDTGVSLISGNPNGEVHSS.

This sequence belongs to the adenylyl cyclase class-4/guanylyl cyclase family. Interacts with the semaphorin 1A receptor PlexA; PlexA enhances Gyc76C catalytic activity. Interacts with the PDZ domain-containing protein kermit; kermit increases cell surface expression of Gyc76C. In the adult, widely distributed in the head and thorax with highest levels in the optic lobe and central brain and expression also detected in the retina. Expressed at similar levels in adult head and body. In females, highly expressed in oocytes with lower levels in the digestive tract. In mid-embryogenesis, enriched in the circular visceral mesoderm that overlies the migrating salivary gland and in the fat body that underlies the gland but at background levels in the gland itself. In late embryogenesis, detected in the mature salivary gland, in the somatic body wall muscles and the tendon cells to which the muscles attach, and in the constricting midgut. Also expressed in migrating tracheal cells at mid-embryogenesis and in the developed trachea at the end of embryogenesis with enrichment in the apical domains.

The protein localises to the cell membrane. It catalyses the reaction GTP = 3',5'-cyclic GMP + diphosphate. Functionally, guanylate cyclase involved in the production of the second messenger cGMP. Acts as a receptor for the NPLP1-4 peptide and modulates the innate immune IMD pathway in response to salt stress by inducing nuclear translocation of NF-kappa-B protein Rel which leads to increased expression of the antimicrobial peptide diptericin. Plays a role in Sema-1a-mediated axon repulsion which is required for the correct establishment of neuromuscular connectivity. Required in developing embryonic somatic muscle for correct patterning of ventral and lateral muscles and for localization of integrin beta-ps at developing dorsal muscle myotendinous junctions. Required for invagination, migration and lumen shape of the embryonic salivary gland by regulating the localization of the integrin-binding protein rhea/Talin to the visceral mesoderm surrounding the gland and maintaining the laminin matrix. Required in the developing wing to regulate extracellular matrix (ECM) organization by activating the cGMP-dependent protein kinase For which represses the activity of matrix metalloproteases such as Mmp2 and decreases ECM matrix reorganization. This chain is Receptor-type guanylate cyclase Gyc76C, found in Drosophila melanogaster (Fruit fly).